The primary structure comprises 447 residues: Na(+)-translocating NADH-quinone reductase subunit A (447 aa).

This sequence belongs to the NqrA family. As to quaternary structure, composed of six subunits; NqrA, NqrB, NqrC, NqrD, NqrE and NqrF.

It carries out the reaction a ubiquinone + n Na(+)(in) + NADH + H(+) = a ubiquinol + n Na(+)(out) + NAD(+). NQR complex catalyzes the reduction of ubiquinone-1 to ubiquinol by two successive reactions, coupled with the transport of Na(+) ions from the cytoplasm to the periplasm. NqrA to NqrE are probably involved in the second step, the conversion of ubisemiquinone to ubiquinol. The sequence is that of Na(+)-translocating NADH-quinone reductase subunit A from Hahella chejuensis (strain KCTC 2396).